The following is a 266-amino-acid chain: Small ribosomal subunit protein uS3m (266 aa).

This sequence belongs to the universal ribosomal protein uS3 family.

It is found in the mitochondrion. The polypeptide is Small ribosomal subunit protein uS3m (MRPS3) (Mycosarcoma maydis (Corn smut fungus)).